The following is a 446-amino-acid chain: Histidine--tRNA ligase (446 aa).

It belongs to the class-II aminoacyl-tRNA synthetase family. As to quaternary structure, homodimer.

The protein localises to the cytoplasm. The catalysed reaction is tRNA(His) + L-histidine + ATP = L-histidyl-tRNA(His) + AMP + diphosphate + H(+). This Paraburkholderia phytofirmans (strain DSM 17436 / LMG 22146 / PsJN) (Burkholderia phytofirmans) protein is Histidine--tRNA ligase.